The primary structure comprises 265 residues: 2-C-methyl-D-erythritol 4-phosphate cytidylyltransferase (265 aa).

A compositionally biased stretch (basic and acidic residues) spans 231–241; the sequence is DRGGASREAER. The disordered stretch occupies residues 231-265; the sequence is DRGGASREAERSAMPSAATSVFSGARSAASGSEEV. The span at 253 to 265 shows a compositional bias: low complexity; the sequence is SGARSAASGSEEV.

It belongs to the IspD/TarI cytidylyltransferase family. IspD subfamily.

The catalysed reaction is 2-C-methyl-D-erythritol 4-phosphate + CTP + H(+) = 4-CDP-2-C-methyl-D-erythritol + diphosphate. It participates in isoprenoid biosynthesis; isopentenyl diphosphate biosynthesis via DXP pathway; isopentenyl diphosphate from 1-deoxy-D-xylulose 5-phosphate: step 2/6. Its function is as follows. Catalyzes the formation of 4-diphosphocytidyl-2-C-methyl-D-erythritol from CTP and 2-C-methyl-D-erythritol 4-phosphate (MEP). The polypeptide is 2-C-methyl-D-erythritol 4-phosphate cytidylyltransferase (Xanthomonas campestris pv. campestris (strain 8004)).